Reading from the N-terminus, the 348-residue chain is 3-isopropylmalate dehydrogenase (348 aa).

Residue 76–87 participates in NAD(+) binding; it reads GPKWTDPNNRPE. Substrate-binding residues include R94, R104, R132, and D217. Residues D217, D241, and D245 each coordinate Mg(2+). NAD(+) is bound at residue 275–287; the sequence is GSAPDIAGKNVAN.

It belongs to the isocitrate and isopropylmalate dehydrogenases family. LeuB type 1 subfamily. Homodimer. It depends on Mg(2+) as a cofactor. The cofactor is Mn(2+).

The protein localises to the cytoplasm. The enzyme catalyses (2R,3S)-3-isopropylmalate + NAD(+) = 4-methyl-2-oxopentanoate + CO2 + NADH. It functions in the pathway amino-acid biosynthesis; L-leucine biosynthesis; L-leucine from 3-methyl-2-oxobutanoate: step 3/4. Functionally, catalyzes the oxidation of 3-carboxy-2-hydroxy-4-methylpentanoate (3-isopropylmalate) to 3-carboxy-4-methyl-2-oxopentanoate. The product decarboxylates to 4-methyl-2 oxopentanoate. The chain is 3-isopropylmalate dehydrogenase from Staphylococcus aureus (strain bovine RF122 / ET3-1).